Consider the following 367-residue polypeptide: Histidinol-phosphate aminotransferase (367 aa).

N6-(pyridoxal phosphate)lysine is present on Lys226.

This sequence belongs to the class-II pyridoxal-phosphate-dependent aminotransferase family. Histidinol-phosphate aminotransferase subfamily. As to quaternary structure, homodimer. The cofactor is pyridoxal 5'-phosphate.

The enzyme catalyses L-histidinol phosphate + 2-oxoglutarate = 3-(imidazol-4-yl)-2-oxopropyl phosphate + L-glutamate. It functions in the pathway amino-acid biosynthesis; L-histidine biosynthesis; L-histidine from 5-phospho-alpha-D-ribose 1-diphosphate: step 7/9. The protein is Histidinol-phosphate aminotransferase of Wolinella succinogenes (strain ATCC 29543 / DSM 1740 / CCUG 13145 / JCM 31913 / LMG 7466 / NCTC 11488 / FDC 602W) (Vibrio succinogenes).